Consider the following 227-residue polypeptide: Large ribosomal subunit protein bL25 (227 aa).

It belongs to the bacterial ribosomal protein bL25 family. CTC subfamily. Part of the 50S ribosomal subunit; part of the 5S rRNA/L5/L18/L25 subcomplex. Contacts the 5S rRNA. Binds to the 5S rRNA independently of L5 and L18.

This is one of the proteins that binds to the 5S RNA in the ribosome where it forms part of the central protuberance. The chain is Large ribosomal subunit protein bL25 from Polaromonas sp. (strain JS666 / ATCC BAA-500).